The chain runs to 122 residues: Large ribosomal subunit protein uL18 (122 aa).

The disordered stretch occupies residues 1 to 27; the sequence is MATLSKKQQTQKRHKRLRRHLNGTNHR. The span at 9 to 27 shows a compositional bias: basic residues; it reads QTQKRHKRLRRHLNGTNHR.

The protein belongs to the universal ribosomal protein uL18 family. As to quaternary structure, part of the 50S ribosomal subunit; part of the 5S rRNA/L5/L18/L25 subcomplex. Contacts the 5S and 23S rRNAs.

In terms of biological role, this is one of the proteins that bind and probably mediate the attachment of the 5S RNA into the large ribosomal subunit, where it forms part of the central protuberance. The chain is Large ribosomal subunit protein uL18 from Prochlorococcus marinus (strain MIT 9211).